A 186-amino-acid chain; its full sequence is MTLLVGLGNPTLRYDHTRHNAGFDILDSLVSELDLSFIFSPKHNAYLCVYKDFILLKPQTYMNLSGESVLSAKNFYKTKELLIVHDDLDLPLGVVKFKKGGGNGGHNGLKSIDALCSNSYYRLRVGISKGINITEHVLSKFHNNEEPLKNAAFEHAKNALKFFIESHDFNATQNRFTLKKPLQIES.

TRNA is bound at residue Tyr14. The active-site Proton acceptor is His19. Positions 61, 63, and 107 each coordinate tRNA.

This sequence belongs to the PTH family. Monomer.

It is found in the cytoplasm. It carries out the reaction an N-acyl-L-alpha-aminoacyl-tRNA + H2O = an N-acyl-L-amino acid + a tRNA + H(+). Hydrolyzes ribosome-free peptidyl-tRNAs (with 1 or more amino acids incorporated), which drop off the ribosome during protein synthesis, or as a result of ribosome stalling. Functionally, catalyzes the release of premature peptidyl moieties from peptidyl-tRNA molecules trapped in stalled 50S ribosomal subunits, and thus maintains levels of free tRNAs and 50S ribosomes. The protein is Peptidyl-tRNA hydrolase of Helicobacter pylori (strain J99 / ATCC 700824) (Campylobacter pylori J99).